A 121-amino-acid chain; its full sequence is Large ribosomal subunit protein uL14 (121 aa).

It belongs to the universal ribosomal protein uL14 family. Part of the 50S ribosomal subunit. Forms a cluster with proteins L3 and L19. In the 70S ribosome, L14 and L19 interact and together make contacts with the 16S rRNA in bridges B5 and B8.

Binds to 23S rRNA. Forms part of two intersubunit bridges in the 70S ribosome. The chain is Large ribosomal subunit protein uL14 from Prochlorococcus marinus (strain MIT 9301).